We begin with the raw amino-acid sequence, 30 residues long: MPVCTSRSLQGGKVDTHFPLHVLHSVACDV.

This is an uncharacterized protein from Treponema pallidum (strain Nichols).